Consider the following 552-residue polypeptide: Putative pentatricopeptide repeat-containing protein At1g64310 (552 aa).

PPR repeat units lie at residues aspartate 39–arginine 69, serine 70–proline 104, aspartate 105–phenylalanine 139, aspartate 140–proline 170, aspartate 171–proline 205, asparagine 206–serine 240, histidine 241–proline 271, aspartate 272–proline 306, aspartate 307–leucine 341, aspartate 342–lysine 372, asparagine 373–proline 407, aspartate 408–glutamate 438, and glutamine 444–proline 474. The interval isoleucine 479–phenylalanine 552 is type E motif; degenerate.

It belongs to the PPR family. PCMP-E subfamily.

This is Putative pentatricopeptide repeat-containing protein At1g64310 (PCMP-E65) from Arabidopsis thaliana (Mouse-ear cress).